The sequence spans 425 residues: MTMAKLTESMTNVLEGDSMDQDVESPVAIHQPKLPKQARDDLPRHISRDRTKRKIQRYVRKDGKCNVHHGNVRETYRYLTDILTTLVDLKWRFNLLIFVMVYTVTWLFFGMIWWLIAYIRGDMDHVEDPSWTPCVTNLNGFVSAFLFSIETETTIGYGYRVITDKCPEGIILLLIQSVLGSIVNAFMVGCMFVKISQPKKRAETLVFSTHAVISMRDGKLCLMFRVGDLRNSHIVEASIRAKLIKSKQTSEGEFIPLNQTDINVGYYTGDDRLFLVSPLIISHEINQQSPFWEISKAQLPKEELEIVVILEGMVEATGMTCQARSSYITSEILWGYRFTPVLTLEDGFYEVDYNSFHETYETSTPSLSAKELAELANRAELPLSWSVSSKLNQHAELETEEEEKNPEEQTERNGDVANLENESKV.

At 1–91 (MTMAKLTESM…ILTTLVDLKW (91 aa)) the chain is on the cytoplasmic side. Phosphoserine occurs at positions 18 and 25. Residues 92 to 116 (RFNLLIFVMVYTVTWLFFGMIWWLI) traverse the membrane as a helical segment. Over 117–140 (AYIRGDMDHVEDPSWTPCVTNLNG) the chain is Extracellular. The segment at residues 141 to 152 (FVSAFLFSIETE) is an intramembrane region (helical; Pore-forming). Positions 153-159 (TTIGYGY) form an intramembrane region, pore-forming. A Selectivity filter motif is present at residues 154 to 159 (TIGYGY). Residues 160–168 (RVITDKCPE) are Extracellular-facing. Residues 169–190 (GIILLLIQSVLGSIVNAFMVGC) form a helical membrane-spanning segment. Topologically, residues 191 to 425 (MFVKISQPKK…VANLENESKV (235 aa)) are cytoplasmic. The segment at 392–425 (NQHAELETEEEEKNPEEQTERNGDVANLENESKV) is disordered. The short motif at 422–425 (ESKV) is the PDZ-binding element.

This sequence belongs to the inward rectifier-type potassium channel (TC 1.A.2.1) family. KCNJ6 subfamily. In terms of assembly, associates with KCNJ3/GIRK1 or KCNJ5/GRIK4 to form a G-protein-activated heteromultimer pore-forming unit. The resulting inward current is much larger. Interacts (via PDZ-binding motif) with SNX27 (via PDZ domain); the interaction is required when endocytosed to prevent degradation in lysosomes and promote recycling to the plasma membrane. Expressed in insulin-secreting cells and brain.

It localises to the membrane. The catalysed reaction is K(+)(in) = K(+)(out). With respect to regulation, activated by phosphatidylinositol 4,5 biphosphate (PtdIns(4,5)P2). In terms of biological role, inward rectifier potassium channels are characterized by a greater tendency to allow potassium to flow into the cell rather than out of it. Their voltage dependence is regulated by the concentration of extracellular potassium; as external potassium is raised, the voltage range of the channel opening shifts to more positive voltages. The inward rectification is mainly due to the blockage of outward current by internal magnesium. This potassium channel may be involved in the regulation of insulin secretion by glucose and/or neurotransmitters acting through G-protein-coupled receptors. The polypeptide is G protein-activated inward rectifier potassium channel 2 (KCNJ6) (Mesocricetus auratus (Golden hamster)).